We begin with the raw amino-acid sequence, 451 residues long: Tubulin alpha-1B chain (451 aa).

The MREC motif motif lies at Met-1–Cys-4. GTP contacts are provided by Gly-10, Gln-11, Ala-12, and Gln-15. Residue Lys-40 is modified to N6,N6,N6-trimethyllysine; alternate. At Lys-40 the chain carries N6-acetyllysine; alternate. Ser-48 bears the Phosphoserine mark. GTP contacts are provided by Glu-71, Ala-99, Ser-140, Gly-143, Gly-144, Thr-145, Gly-146, Thr-179, Glu-183, Asn-206, Tyr-224, and Asn-228. Mg(2+) is bound at residue Glu-71. The residue at position 232 (Ser-232) is a Phosphoserine. GTP is bound at residue Leu-252. Residue Glu-254 is part of the active site. Tyr-282 is subject to 3'-nitrotyrosine. Lys-326 participates in a covalent cross-link: Glycyl lysine isopeptide (Lys-Gly) (interchain with G-Cter in ubiquitin). Arg-339 bears the Omega-N-methylarginine mark. Residue Lys-370 forms a Glycyl lysine isopeptide (Lys-Gly) (interchain with G-Cter in ubiquitin) linkage. Residue Ser-439 is modified to Phosphoserine. 2 positions are modified to 5-glutamyl polyglutamate: Glu-443 and Glu-445. The residue at position 451 (Tyr-451) is a 3'-nitrotyrosine.

Belongs to the tubulin family. As to quaternary structure, heterodimer of alpha- and beta-tubulin. A typical microtubule is a hollow water-filled tube with an outer diameter of 25 nm and an inner diameter of 15 nM. Alpha-beta heterodimers associate head-to-tail to form protofilaments running lengthwise along the microtubule wall with the beta-tubulin subunit facing the microtubule plus end conferring a structural polarity. Microtubules usually have 13 protofilaments but different protofilament numbers can be found in some organisms and specialized cells. Interacts with gamma-tubulin; the interaction allows microtubules to nucleate from the gamma-tubulin ring complex (gTuRC). Nascent microtubule interacts (via alpha-tubulin MREC motif) with TTC5/STRAP; this interaction may result in tubulin mRNA-targeted degradation. Component of sperm flagellar doublet microtubules. The cofactor is Mg(2+). Post-translationally, some glutamate residues at the C-terminus are polyglycylated, resulting in polyglycine chains on the gamma-carboxyl group. Glycylation is mainly limited to tubulin incorporated into axonemes (cilia and flagella) whereas glutamylation is prevalent in neuronal cells, centrioles, axonemes, and the mitotic spindle. Both modifications can coexist on the same protein on adjacent residues, and lowering polyglycylation levels increases polyglutamylation, and reciprocally. Cilia and flagella glycylation is required for their stability and maintenance. Flagella glycylation controls sperm motility. Some glutamate residues at the C-terminus are polyglutamylated, resulting in polyglutamate chains on the gamma-carboxyl group. Polyglutamylation plays a key role in microtubule severing by spastin (SPAST). SPAST preferentially recognizes and acts on microtubules decorated with short polyglutamate tails: severing activity by SPAST increases as the number of glutamates per tubulin rises from one to eight, but decreases beyond this glutamylation threshold. Glutamylation is also involved in cilia motility. In terms of processing, acetylation of alpha chains at Lys-40 is located inside the microtubule lumen. This modification has been correlated with increased microtubule stability, intracellular transport and ciliary assembly. Post-translationally, methylation of alpha chains at Lys-40 is found in mitotic microtubules and is required for normal mitosis and cytokinesis contributing to genomic stability. Nitration of Tyr-451 is irreversible and interferes with normal dynein intracellular distribution. In terms of processing, undergoes a tyrosination/detyrosination cycle, the cyclic removal and re-addition of a C-terminal tyrosine residue by the enzymes tubulin tyrosine carboxypeptidase (MATCAP1, VASH1 or VASH2) and tubulin tyrosine ligase (TTL), respectively. Post-translationally, tyrosination promotes microtubule interaction with CAP-Gly domain-containing proteins such as CLIP1, CLIP2 and DCTN1. Tyrosination regulates the initiation of dynein-dynactin motility via interaction with DCTN1, which brings the dynein-dynactin complex into contact with microtubules. In neurons, tyrosinated tubulins mediate the initiation of retrograde vesicle transport. Detyrosination is involved in metaphase plate congression by guiding chromosomes during mitosis: detyrosination promotes interaction with CENPE, promoting pole-proximal transport of chromosomes toward the equator. Detyrosination increases microtubules-dependent mechanotransduction in dystrophic cardiac and skeletal muscle. In cardiomyocytes, detyrosinated microtubules are required to resist to contractile compression during contraction: detyrosination promotes association with desmin (DES) at force-generating sarcomeres, leading to buckled microtubules and mechanical resistance to contraction.

It is found in the cytoplasm. Its subcellular location is the cytoskeleton. It carries out the reaction GTP + H2O = GDP + phosphate + H(+). Functionally, tubulin is the major constituent of microtubules, protein filaments consisting of alpha- and beta-tubulin heterodimers. Microtubules grow by the addition of GTP-tubulin dimers to the microtubule end, where a stabilizing cap forms. Below the cap, tubulin dimers are in GDP-bound state, owing to GTPase activity of alpha-tubulin. This chain is Tubulin alpha-1B chain (TUBA1B), found in Pan troglodytes (Chimpanzee).